The primary structure comprises 405 residues: Glucose-1-phosphate adenylyltransferase 1 (405 aa).

Residues Y96, G161, 176–177, and S194 contribute to the alpha-D-glucose 1-phosphate site; that span reads EK.

It belongs to the bacterial/plant glucose-1-phosphate adenylyltransferase family. In terms of assembly, homotetramer.

It catalyses the reaction alpha-D-glucose 1-phosphate + ATP + H(+) = ADP-alpha-D-glucose + diphosphate. Its pathway is glycan biosynthesis; glycogen biosynthesis. In terms of biological role, involved in the biosynthesis of ADP-glucose, a building block required for the elongation reactions to produce glycogen. Catalyzes the reaction between ATP and alpha-D-glucose 1-phosphate (G1P) to produce pyrophosphate and ADP-Glc. In Vibrio cholerae serotype O1 (strain ATCC 39315 / El Tor Inaba N16961), this protein is Glucose-1-phosphate adenylyltransferase 1.